The sequence spans 342 residues: Dual-specificity RNA methyltransferase RlmN (342 aa).

Catalysis depends on Glu-92, which acts as the Proton acceptor. The 232-residue stretch at 98–329 folds into the Radical SAM core domain; the sequence is DLPRSTLCVS…THVRRSRGGE (232 aa). A disulfide bridge links Cys-105 with Cys-334. Cys-112, Cys-116, and Cys-119 together coordinate [4Fe-4S] cluster. S-adenosyl-L-methionine is bound by residues 161-162, Ser-193, 215-217, and Asn-291; these read GE and SLH. Cys-334 functions as the S-methylcysteine intermediate in the catalytic mechanism.

Belongs to the radical SAM superfamily. RlmN family. It depends on [4Fe-4S] cluster as a cofactor.

It localises to the cytoplasm. It carries out the reaction adenosine(2503) in 23S rRNA + 2 reduced [2Fe-2S]-[ferredoxin] + 2 S-adenosyl-L-methionine = 2-methyladenosine(2503) in 23S rRNA + 5'-deoxyadenosine + L-methionine + 2 oxidized [2Fe-2S]-[ferredoxin] + S-adenosyl-L-homocysteine. It catalyses the reaction adenosine(37) in tRNA + 2 reduced [2Fe-2S]-[ferredoxin] + 2 S-adenosyl-L-methionine = 2-methyladenosine(37) in tRNA + 5'-deoxyadenosine + L-methionine + 2 oxidized [2Fe-2S]-[ferredoxin] + S-adenosyl-L-homocysteine. Functionally, specifically methylates position 2 of adenine 2503 in 23S rRNA and position 2 of adenine 37 in tRNAs. m2A2503 modification seems to play a crucial role in the proofreading step occurring at the peptidyl transferase center and thus would serve to optimize ribosomal fidelity. The sequence is that of Dual-specificity RNA methyltransferase RlmN from Syntrophobacter fumaroxidans (strain DSM 10017 / MPOB).